We begin with the raw amino-acid sequence, 519 residues long: Flavin-dependent halogenase rdc2 (519 aa).

An N-terminal signal peptide occupies residues 1 to 21; it reads MSVPKSCTILVAGGGPAGSYA. The FAD site is built by Gly-14, Ala-17, and Glu-47. Positions 324 and 325 each coordinate chloride.

Belongs to the flavin-dependent halogenase family.

It participates in secondary metabolite biosynthesis. In terms of biological role, flavin-dependent halogenase; part of the gene cluster that mediates the biosynthesis of radicicol, a resorcylic acid lactone (RAL) that irreversibly inhibits the HSP90 molecular chaperone, an important target for cancer chemotherapy. Within the cluster, rdc2 is involved in the chlorination of the resorcylic acid lactone (RAL) structure to convert monocillin I into radicicol. Also chlorinates monocillin II to produce 6-cholomonocillin II and monocilllin IV to produce 13-chloromonocillin IV. In contrast to most fungal halogenases, rdc2 has a broad substrate specificity and can accept a variety of macrolactones as the substrates to generate chlorinated derivatives, including dihydroresorcylide, zearalenone, curvularin, or even curcumin. Rdc2 is able to dichlorinate dihydroresorcylide and monocillin IV. Dihydroresorcylide is first chlorinated at position 11 to produce 11-chlorodihydroresorcylide which can be further chlorinated by rdc2 at possition 13. Mororeover, rdc2 can incorporate bromine into dihydroresorcylide to yield the corresponding mono- and di-brominated derivatives. Finally, rdc2 is also able to halogenate the isoquinolines 4-hydroxyisoquinoline and 6-hydroxyisoquinoline into 3-chloro-4-hydroxyisoquinoline and 5-chloro-6-hydroxyisoquinoline, respectively. The radicicol cluster encodes only two apparent post-PKS enzymes, a cytochrome P450 monooxygenase (rdc4) and a non-heme halogenase (rdc2) that could introduce the epoxide and the chlorine, respectively. If this cluster includes all the genes required for radicicol biosynthesis, the remaining structural features of radicicol are presumably generated by the PKSs rdc1 and rdc5. The C-2' ketone could arise if the R-PKS rdc5 and NR-PKS rdc1 each carry out four iterations, in contrast to the five iteration-three iteration split for the hypothemycin PKSs. The origin of the cis 5',6' double bond is not known. The radicicol R-PKS rdc5 ER domain may catalyze either double bond isomerization or reduction in the third iteration. The chain is Flavin-dependent halogenase rdc2 from Metacordyceps chlamydosporia (Nematophagous fungus).